A 217-amino-acid polypeptide reads, in one-letter code: Probable cutinase 3 (217 aa).

The N-terminal stretch at 1-17 is a signal peptide; it reads MSLRSLFVAGLATLALA. 2 disulfide bridges follow: cysteine 39–cysteine 118 and cysteine 65–cysteine 79. The Nucleophile role is filled by serine 129. Cysteine 180 and cysteine 187 are disulfide-bonded. Residue aspartate 184 is part of the active site. Histidine 197 functions as the Proton donor/acceptor in the catalytic mechanism.

This sequence belongs to the cutinase family.

The protein localises to the secreted. The catalysed reaction is cutin + H2O = cutin monomers.. Catalyzes the hydrolysis of complex carboxylic polyesters found in the cell wall of plants. Degrades cutin, a macromolecule that forms the structure of the plant cuticle. This Neosartorya fischeri (strain ATCC 1020 / DSM 3700 / CBS 544.65 / FGSC A1164 / JCM 1740 / NRRL 181 / WB 181) (Aspergillus fischerianus) protein is Probable cutinase 3.